The chain runs to 58 residues: uncharacterized protein (58 aa).

This is an uncharacterized protein from Treponema pallidum (strain Nichols).